Reading from the N-terminus, the 476-residue chain is Aspartyl/glutamyl-tRNA(Asn/Gln) amidotransferase subunit B (476 aa).

The protein belongs to the GatB/GatE family. GatB subfamily. Heterotrimer of A, B and C subunits.

The catalysed reaction is L-glutamyl-tRNA(Gln) + L-glutamine + ATP + H2O = L-glutaminyl-tRNA(Gln) + L-glutamate + ADP + phosphate + H(+). It catalyses the reaction L-aspartyl-tRNA(Asn) + L-glutamine + ATP + H2O = L-asparaginyl-tRNA(Asn) + L-glutamate + ADP + phosphate + 2 H(+). Its function is as follows. Allows the formation of correctly charged Asn-tRNA(Asn) or Gln-tRNA(Gln) through the transamidation of misacylated Asp-tRNA(Asn) or Glu-tRNA(Gln) in organisms which lack either or both of asparaginyl-tRNA or glutaminyl-tRNA synthetases. The reaction takes place in the presence of glutamine and ATP through an activated phospho-Asp-tRNA(Asn) or phospho-Glu-tRNA(Gln). This Nitratidesulfovibrio vulgaris (strain ATCC 29579 / DSM 644 / CCUG 34227 / NCIMB 8303 / VKM B-1760 / Hildenborough) (Desulfovibrio vulgaris) protein is Aspartyl/glutamyl-tRNA(Asn/Gln) amidotransferase subunit B.